Consider the following 178-residue polypeptide: Signaling threshold-regulating transmembrane adapter 1 (178 aa).

At 1–23 (MSRENNCTTADLAWGIPSITQAW) the chain is on the extracellular side. Residue N6 is glycosylated (N-linked (GlcNAc...) asparagine). Residues 24 to 44 (GLWALFGVVTMLLLISLAALL) traverse the membrane as a helical; Signal-anchor for type III membrane protein segment. Residues 45–178 (SQWTRGRRRT…AYANSQPAPS (134 aa)) are Cytoplasmic-facing. Phosphoserine occurs at positions 62 and 65. Position 72 is a phosphotyrosine (Y72). Residues 72–75 (YGNL) form an interaction with GRB2 region. The interval 81–102 (GRLSEESRSEEQDPSSGGLARG) is disordered. Phosphoserine is present on residues S84, S87, and S89. The residue at position 109 (Y109) is a Phosphotyrosine. A Phosphothreonine modification is found at T126. The segment at 128–133 (IKYCEV) is interaction with PTPN11. 2 positions are modified to phosphotyrosine: Y130 and Y151. Positions 151–154 (YASV) are interaction with CSK. S164 is subject to Phosphoserine. Y170 is subject to Phosphotyrosine. The tract at residues 170–173 (YANS) is interaction with GRB2.

In terms of assembly, homodimer; disulfide-linked. When phosphorylated, interacts with PTPN11/SHP2, GRB2 and CSK. In terms of processing, phosphorylated on tyrosines upon TCR activation; which promotes recruitment of PTPN11, GRB2 and CSK. Lymph node, spleen and thymus.

Its subcellular location is the cell membrane. Functionally, negatively regulates T-cell antigen receptor (TCR)-mediated signaling. Involved in positive selection of T-cells. The chain is Signaling threshold-regulating transmembrane adapter 1 (Sit1) from Rattus norvegicus (Rat).